Here is a 435-residue protein sequence, read N- to C-terminus: Gamma-glutamyl phosphate reductase (435 aa).

The protein belongs to the gamma-glutamyl phosphate reductase family.

It is found in the cytoplasm. The enzyme catalyses L-glutamate 5-semialdehyde + phosphate + NADP(+) = L-glutamyl 5-phosphate + NADPH + H(+). The protein operates within amino-acid biosynthesis; L-proline biosynthesis; L-glutamate 5-semialdehyde from L-glutamate: step 2/2. Its function is as follows. Catalyzes the NADPH-dependent reduction of L-glutamate 5-phosphate into L-glutamate 5-semialdehyde and phosphate. The product spontaneously undergoes cyclization to form 1-pyrroline-5-carboxylate. This Xylella fastidiosa (strain M12) protein is Gamma-glutamyl phosphate reductase.